Here is a 279-residue protein sequence, read N- to C-terminus: MAAAFDPSGRFPDLFTSVGTSSFSAFLSKAAPELLPGRRPLPPGMATGLTPHATTIVAIATAGGVVLAGDRRATMGNLIAQRDVEKVHPADAYSLVGMAGAAGIGIELTRLFQVELEHYEKTEGAMLSLDGKANRLAAMVRGNLGAAMQGLAVVPLFAGFDLAATDPAKAGRIFSFDVTGGPYEETGYDAVGSGSVFAKSALKKRFRLGLSVDDAVRLAVEALYDAADDDTATGGPDLTRRIYPVVMSATAEGTHRLTEAETAAIAESVVAGRMENPGG.

The propeptide at 1-53 is removed in mature form; by autocatalysis; the sequence is MAAAFDPSGRFPDLFTSVGTSSFSAFLSKAAPELLPGRRPLPPGMATGLTPHA. The active-site Nucleophile is threonine 54.

Belongs to the peptidase T1B family. The 20S proteasome core is composed of 14 alpha and 14 beta subunits that assemble into four stacked heptameric rings, resulting in a barrel-shaped structure. The two inner rings, each composed of seven catalytic beta subunits, are sandwiched by two outer rings, each composed of seven alpha subunits. The catalytic chamber with the active sites is on the inside of the barrel. Has a gated structure, the ends of the cylinder being occluded by the N-termini of the alpha-subunits. Is capped by the proteasome-associated ATPase, ARC.

The protein localises to the cytoplasm. The enzyme catalyses Cleavage of peptide bonds with very broad specificity.. It functions in the pathway protein degradation; proteasomal Pup-dependent pathway. Its activity is regulated as follows. The formation of the proteasomal ATPase ARC-20S proteasome complex, likely via the docking of the C-termini of ARC into the intersubunit pockets in the alpha-rings, may trigger opening of the gate for substrate entry. Interconversion between the open-gate and close-gate conformations leads to a dynamic regulation of the 20S proteasome proteolysis activity. Its function is as follows. Component of the proteasome core, a large protease complex with broad specificity involved in protein degradation. The polypeptide is Proteasome subunit beta 2 (Salinispora tropica (strain ATCC BAA-916 / DSM 44818 / JCM 13857 / NBRC 105044 / CNB-440)).